Consider the following 250-residue polypeptide: N-acyl homoserine lactonase (250 aa).

The Zn(2+) site is built by histidine 104, histidine 106, aspartate 108, histidine 109, histidine 169, aspartate 191, and histidine 235.

This sequence belongs to the metallo-beta-lactamase superfamily. In terms of assembly, monomer. Zn(2+) is required as a cofactor.

The catalysed reaction is an N-acyl-L-homoserine lactone + H2O = an N-acyl-L-homoserine + H(+). With respect to regulation, completely inhibited by Cu(2+) and Ag(+). Partially inhibited by Cr(2+), Pb(2+) and Fe(2+). Mg(2+), Ca(2+), Mn(2+), Co(2+), Ni(2+), Zn(2+) and Cd(2+) have no effect on activity. The chelating agents EDTA, 2,2'bipyridine and o-phenanthroline have no effect on enzyme activity. Hydrolyzes acyl homoserine lactones with varying lengths of acyl chains, with a slight preference for substrates without 3-oxo substitution at the C3 position. Has only residual activity towards non-acyl lactones, and no activity towards non-cyclic esters. This Bacillus sp protein is N-acyl homoserine lactonase.